The following is a 153-amino-acid chain: T cell receptor delta constant (153 aa).

A glycan (N-linked (GlcNAc...) asparagine) is linked at asparagine 14. A disulfide bridge connects residues cysteine 20 and cysteine 71. N-linked (GlcNAc...) asparagine glycosylation is present at asparagine 77. Over residues 85–102 (FEVKTDSTDHVKPKETEN) the composition is skewed to basic and acidic residues. The tract at residues 85–112 (FEVKTDSTDHVKPKETENTKQPSKSCHK) is disordered. The chain crosses the membrane as a helical span at residues 130–152 (LGLRMLFAKTVAVNFLLTAKLFF).

Gamma-delta TR is a heterodimer composed of a gamma and delta chain; disulfide-linked. The gamma-delta TR is associated with the transmembrane signaling CD3 coreceptor proteins following the stoichiometry: a single gamma-delta TR heterodimer associates with one CD3D-CD3E heterodimer, one CD3G-CD3E heterodimer and one CD247 homodimer forming a stable octameric structure. Upon activation, gamma-delta TR complex associates with FCER1G to initiate intracellular signaling.

It localises to the cell membrane. In terms of biological role, constant region of T cell receptor (TR) delta chain that participates in the antigen recognition. Gamma-delta TRs recognize a variety of self and foreign non-peptide antigens frequently expressed at the epithelial boundaries between the host and external environment, including endogenous lipids presented by MH-like protein CD1D and phosphoantigens presented by butyrophilin-like molecule BTN3A1. Upon antigen recognition induces rapid, innate-like immune responses involved in pathogen clearance and tissue repair. Binding of gamma-delta TR complex to antigen triggers phosphorylation of immunoreceptor tyrosine-based activation motifs (ITAMs) in the CD3 chains by the LCK and FYN kinases, allowing the recruitment, phosphorylation, and activation of ZAP70 that facilitates phosphorylation of the scaffolding proteins LCP2 and LAT. This lead to the formation of a supramolecular signalosome that recruits the phospholipase PLCG1, resulting in calcium mobilization and ERK activation, ultimately leading to T cell expansion and differentiation into effector cells. Gamma-delta TRs are produced through somatic rearrangement of a limited repertoire of variable (V), diversity (D), and joining (J) genes. The potential diversity of gamma-delta TRs is conferred by the unique ability to rearrange (D) genes in tandem and to utilize all three reading frames. The combinatorial diversity is considerably increased by the sequence exonuclease trimming and random nucleotide (N) region additions which occur during the V-(D)-J rearrangements. This is T cell receptor delta constant from Homo sapiens (Human).